A 230-amino-acid polypeptide reads, in one-letter code: Transmembrane protein 225 (230 aa).

At Met1–Ser8 the chain is on the cytoplasmic side. A helical transmembrane segment spans residues Ile9 to Ile29. Residues Met30 to Arg71 are Extracellular-facing. Residues Met72–Ile92 traverse the membrane as a helical segment. At Ser93–His99 the chain is on the cytoplasmic side. The chain crosses the membrane as a helical span at residues Leu100–Tyr120. The Extracellular portion of the chain corresponds to His121–Trp139. Residues Ile140 to Ile160 traverse the membrane as a helical segment. Topologically, residues Gln161 to Leu230 are cytoplasmic. The short motif at Arg224 to Trp228 is the RVxF element.

In terms of assembly, interacts (via RVxF motif) with PPP1CC. As to expression, expressed in testis, epididymis and spermatozoa (at protein level). Not expressed in brain, heart, lung, liver, spleen, kidney and skeletal muscle.

The protein localises to the cytoplasmic vesicle. The protein resides in the secretory vesicle. It localises to the acrosome membrane. Functionally, probably inhibits protein phosphatase 1 (PP1) in sperm via binding to catalytic subunit PPP1CC. This chain is Transmembrane protein 225 (Tmem225), found in Mus musculus (Mouse).